The chain runs to 61 residues: UPF0337 protein LMOf2365_2190 (61 aa).

The segment at methionine 1–glutamate 61 is disordered.

The protein belongs to the UPF0337 (CsbD) family.

The sequence is that of UPF0337 protein LMOf2365_2190 from Listeria monocytogenes serotype 4b (strain F2365).